Reading from the N-terminus, the 522-residue chain is Protein nucleotidyltransferase YdiU (522 aa).

Gly-109, Gly-111, Arg-112, Lys-132, Asp-144, Gly-145, Arg-195, and Arg-202 together coordinate ATP. Asp-271 functions as the Proton acceptor in the catalytic mechanism. 2 residues coordinate Mg(2+): Asn-272 and Asp-281. Asp-281 provides a ligand contact to ATP.

This sequence belongs to the SELO family. Mg(2+) serves as cofactor. The cofactor is Mn(2+).

The catalysed reaction is L-seryl-[protein] + ATP = 3-O-(5'-adenylyl)-L-seryl-[protein] + diphosphate. The enzyme catalyses L-threonyl-[protein] + ATP = 3-O-(5'-adenylyl)-L-threonyl-[protein] + diphosphate. It catalyses the reaction L-tyrosyl-[protein] + ATP = O-(5'-adenylyl)-L-tyrosyl-[protein] + diphosphate. It carries out the reaction L-histidyl-[protein] + UTP = N(tele)-(5'-uridylyl)-L-histidyl-[protein] + diphosphate. The catalysed reaction is L-seryl-[protein] + UTP = O-(5'-uridylyl)-L-seryl-[protein] + diphosphate. The enzyme catalyses L-tyrosyl-[protein] + UTP = O-(5'-uridylyl)-L-tyrosyl-[protein] + diphosphate. Nucleotidyltransferase involved in the post-translational modification of proteins. It can catalyze the addition of adenosine monophosphate (AMP) or uridine monophosphate (UMP) to a protein, resulting in modifications known as AMPylation and UMPylation. This Burkholderia vietnamiensis (strain G4 / LMG 22486) (Burkholderia cepacia (strain R1808)) protein is Protein nucleotidyltransferase YdiU.